Consider the following 609-residue polypeptide: Pentatricopeptide repeat-containing protein At1g03540 (609 aa).

PPR repeat units follow at residues 25 to 59 (SAPT…EIPA), 60 to 94 (TPKL…GLET), 95 to 126 (DRNV…RFVK), 127 to 161 (DAIS…GLDA), 162 to 196 (NEFT…GFEW), 197 to 227 (NHFI…MPEP), 228 to 263 (DVIC…GLVP), 264 to 298 (DGST…GIGS), 299 to 329 (NVVV…MSKK), 330 to 364 (NSVS…DLYC), 396 to 426 (NVIV…MSIR), 427 to 461 (NMIT…GIKP), 462 to 497 (DYIS…GIKP), and 498 to 532 (GTEH…NDAS). Positions 533-609 (LWGVLLGPCA…TVGQSWIDAH (77 aa)) are type E motif.

The protein belongs to the PPR family. PCMP-E subfamily.

The polypeptide is Pentatricopeptide repeat-containing protein At1g03540 (PCMP-E4) (Arabidopsis thaliana (Mouse-ear cress)).